Consider the following 91-residue polypeptide: Probable Fe(2+)-trafficking protein (91 aa).

The protein belongs to the Fe(2+)-trafficking protein family.

Could be a mediator in iron transactions between iron acquisition and iron-requiring processes, such as synthesis and/or repair of Fe-S clusters in biosynthetic enzymes. The protein is Probable Fe(2+)-trafficking protein of Burkholderia thailandensis (strain ATCC 700388 / DSM 13276 / CCUG 48851 / CIP 106301 / E264).